Consider the following 475-residue polypeptide: Protein transport protein Sec61 subunit alpha (475 aa).

The next 10 helical transmembrane spans lie at 33-53, 76-96, 118-138, 145-165, 173-193, 241-261, 289-309, 354-374, 420-440, and 441-461; these read LWTA…LFGI, LMEL…LLAG, LFGM…GMYG, AGIC…VLLL, YGLG…TIVW, NLMN…FQGF, IPII…QMLA, FLDP…CAFF, AAFG…IGAI, and GSGT…EIFV.

The protein belongs to the SecY/SEC61-alpha family. As to quaternary structure, the SEC61 channel-forming translocon complex consists of channel-forming core components SEC61A1, SEC61B and SEC61G and different auxiliary components such as SEC62 and SEC63. The SEC61 channel associates with the multi-pass translocon (MPT) complex. Expressed predominantly in epidermal cells of the embryo.

Its subcellular location is the endoplasmic reticulum membrane. Component of SEC61 channel-forming translocon complex that mediates transport of signal peptide-containing precursor polypeptides across the endoplasmic reticulum (ER). Forms a ribosome receptor and a gated pore in the ER membrane, both functions required for cotranslational translocation of nascent polypeptides. May cooperate with auxiliary protein SEC62, SEC63 and HSPA5/BiP to enable post-translational transport of small presecretory proteins. The SEC61 channel is also involved in ER membrane insertion of transmembrane proteins: it mediates membrane insertion of the first few transmembrane segments of proteins, while insertion of subsequent transmembrane regions of multi-pass membrane proteins is mediated by the multi-pass translocon (MPT) complex. The sequence is that of Protein transport protein Sec61 subunit alpha from Halocynthia roretzi (Sea squirt).